A 363-amino-acid polypeptide reads, in one-letter code: Aminomethyltransferase (363 aa).

The protein belongs to the GcvT family. As to quaternary structure, the glycine cleavage system is composed of four proteins: P, T, L and H.

It catalyses the reaction N(6)-[(R)-S(8)-aminomethyldihydrolipoyl]-L-lysyl-[protein] + (6S)-5,6,7,8-tetrahydrofolate = N(6)-[(R)-dihydrolipoyl]-L-lysyl-[protein] + (6R)-5,10-methylene-5,6,7,8-tetrahydrofolate + NH4(+). Functionally, the glycine cleavage system catalyzes the degradation of glycine. The chain is Aminomethyltransferase from Thermosipho melanesiensis (strain DSM 12029 / CIP 104789 / BI429).